We begin with the raw amino-acid sequence, 429 residues long: Glutamate-1-semialdehyde 2,1-aminomutase (429 aa).

An N6-(pyridoxal phosphate)lysine modification is found at K267.

The protein belongs to the class-III pyridoxal-phosphate-dependent aminotransferase family. HemL subfamily. Homodimer. Pyridoxal 5'-phosphate is required as a cofactor.

The protein resides in the cytoplasm. It carries out the reaction (S)-4-amino-5-oxopentanoate = 5-aminolevulinate. Its pathway is porphyrin-containing compound metabolism; protoporphyrin-IX biosynthesis; 5-aminolevulinate from L-glutamyl-tRNA(Glu): step 2/2. In Stenotrophomonas maltophilia (strain R551-3), this protein is Glutamate-1-semialdehyde 2,1-aminomutase.